The chain runs to 86 residues: MKSSMQLISTLFFLVILVVAPGMKMVVEGQPQLCETKSLNYRGLCLKWRSCKRVCISEGFPDGRCKGFFNNKCVCRKPCALLSTEN.

The first 29 residues, 1–29 (MKSSMQLISTLFFLVILVVAPGMKMVVEG), serve as a signal peptide directing secretion. Glutamine 30 carries the pyrrolidone carboxylic acid modification. Intrachain disulfides connect cysteine 34–cysteine 79, cysteine 45–cysteine 65, cysteine 51–cysteine 73, and cysteine 55–cysteine 75.

Belongs to the DEFL family.

Its subcellular location is the secreted. The protein is Putative defensin-like protein 9 (LCR76) of Arabidopsis thaliana (Mouse-ear cress).